The chain runs to 251 residues: Coproheme decarboxylase (251 aa).

Residues Arg133, 147–151, His174, Gln187, and Ser225 each bind Fe-coproporphyrin III; that span reads YPMSK. Tyr147 is a catalytic residue.

This sequence belongs to the ChdC family. Type 1 subfamily. Fe-coproporphyrin III serves as cofactor.

The enzyme catalyses Fe-coproporphyrin III + 2 H2O2 + 2 H(+) = heme b + 2 CO2 + 4 H2O. The catalysed reaction is Fe-coproporphyrin III + H2O2 + H(+) = harderoheme III + CO2 + 2 H2O. It catalyses the reaction harderoheme III + H2O2 + H(+) = heme b + CO2 + 2 H2O. It functions in the pathway porphyrin-containing compound metabolism; protoheme biosynthesis. Its function is as follows. Involved in coproporphyrin-dependent heme b biosynthesis. Catalyzes the decarboxylation of Fe-coproporphyrin III (coproheme) to heme b (protoheme IX), the last step of the pathway. The reaction occurs in a stepwise manner with a three-propionate intermediate. The protein is Coproheme decarboxylase of Listeria monocytogenes serotype 4b (strain CLIP80459).